The chain runs to 289 residues: Metal-staphylopine import system permease protein CntC (289 aa).

5 consecutive transmembrane segments (helical) span residues 13–33, 77–97, 115–135, 194–214, and 249–269; these read AVIALGIIVLYVFLGLAAPLV, LLYVFVALFVSVLIGSILGFL, VMLAFPSYVVTLALIALFGMG, IAIISSSSMCSMILQISGFSF, and IAIVIIVMAFNFLSDALQIAI. The ABC transmembrane type-1 domain maps to 73–262; it reads IRPSLLYVFV…IIVMAFNFLS (190 aa).

Belongs to the binding-protein-dependent transport system permease family. As to quaternary structure, the complex is composed of two ATP-binding proteins (CntD and CntF), two transmembrane proteins (CntB and CntC) and a solute-binding protein (CntA).

Its subcellular location is the cell membrane. Functionally, part of the ABC transporter complex CntABCDF (Opp1) involved in the uptake of metal in complex with the metallophore staphylopine (StP). May be involved in the import of a large array of divalent metals ions such as nickel, cobalt, zinc, copper and iron. Probably responsible for the translocation of the substrate across the membrane. The protein is Metal-staphylopine import system permease protein CntC of Staphylococcus aureus (strain Mu50 / ATCC 700699).